The following is a 288-amino-acid chain: 4-diphosphocytidyl-2-C-methyl-D-erythritol kinase (288 aa).

The active site involves Lys-8. 92–102 (PVAAGMAGGST) is a binding site for ATP. Asp-134 is a catalytic residue.

This sequence belongs to the GHMP kinase family. IspE subfamily.

The catalysed reaction is 4-CDP-2-C-methyl-D-erythritol + ATP = 4-CDP-2-C-methyl-D-erythritol 2-phosphate + ADP + H(+). It participates in isoprenoid biosynthesis; isopentenyl diphosphate biosynthesis via DXP pathway; isopentenyl diphosphate from 1-deoxy-D-xylulose 5-phosphate: step 3/6. Its function is as follows. Catalyzes the phosphorylation of the position 2 hydroxy group of 4-diphosphocytidyl-2C-methyl-D-erythritol. This chain is 4-diphosphocytidyl-2-C-methyl-D-erythritol kinase, found in Clostridium perfringens (strain ATCC 13124 / DSM 756 / JCM 1290 / NCIMB 6125 / NCTC 8237 / Type A).